Here is a 413-residue protein sequence, read N- to C-terminus: Eukaryotic initiation factor 4A-7 (413 aa).

Residues 40-68 carry the Q motif motif; sequence DSFDAMGLQENLLRGIYAYGFEKPSAIQQ. Residues 71 to 241 enclose the Helicase ATP-binding domain; that stretch reads IVPFCKGLDV…RKFMNKPVRI (171 aa). 84-91 is an ATP binding site; the sequence is AQSGTGKT. Residues 189–192 carry the DEAD box motif; sequence DEAD. The region spanning 252-413 is the Helicase C-terminal domain; sequence GIKQFYVNVD…ELPANVADLL (162 aa).

This sequence belongs to the DEAD box helicase family. eIF4A subfamily. In terms of assembly, eIF4F is a multi-subunit complex, the composition of which varies with external and internal environmental conditions. It is composed of at least EIF4A, EIF4E and EIF4G.

It carries out the reaction ATP + H2O = ADP + phosphate + H(+). Its function is as follows. ATP-dependent RNA helicase which is a subunit of the eIF4F complex involved in cap recognition and is required for mRNA binding to ribosome. In the current model of translation initiation, eIF4A unwinds RNA secondary structures in the 5'-UTR of mRNAs which is necessary to allow efficient binding of the small ribosomal subunit, and subsequent scanning for the initiator codon. The sequence is that of Eukaryotic initiation factor 4A-7 from Nicotiana tabacum (Common tobacco).